Reading from the N-terminus, the 498-residue chain is ATP synthase subunit beta, chloroplastic (498 aa).

172-179 serves as a coordination point for ATP; the sequence is GGAGVGKT.

The protein belongs to the ATPase alpha/beta chains family. As to quaternary structure, F-type ATPases have 2 components, CF(1) - the catalytic core - and CF(0) - the membrane proton channel. CF(1) has five subunits: alpha(3), beta(3), gamma(1), delta(1), epsilon(1). CF(0) has four main subunits: a(1), b(1), b'(1) and c(9-12).

It is found in the plastid. The protein resides in the chloroplast thylakoid membrane. The enzyme catalyses ATP + H2O + 4 H(+)(in) = ADP + phosphate + 5 H(+)(out). Functionally, produces ATP from ADP in the presence of a proton gradient across the membrane. The catalytic sites are hosted primarily by the beta subunits. The sequence is that of ATP synthase subunit beta, chloroplastic from Montinia caryophyllacea (Wild clove bush).